We begin with the raw amino-acid sequence, 468 residues long: Phosphomethylpyrimidine synthase (468 aa).

Substrate contacts are provided by residues Asn80, Met109, Tyr138, His173, 193–195 (SRG), 234–237 (DGLR), and Glu273. Residue His277 coordinates Zn(2+). Tyr300 lines the substrate pocket. His341 lines the Zn(2+) pocket. Residues Cys421, Cys424, and Cys429 each contribute to the [4Fe-4S] cluster site.

The protein belongs to the ThiC family. As to quaternary structure, homodimer. Requires [4Fe-4S] cluster as cofactor.

It catalyses the reaction 5-amino-1-(5-phospho-beta-D-ribosyl)imidazole + S-adenosyl-L-methionine = 4-amino-2-methyl-5-(phosphooxymethyl)pyrimidine + CO + 5'-deoxyadenosine + formate + L-methionine + 3 H(+). The protein operates within cofactor biosynthesis; thiamine diphosphate biosynthesis. In terms of biological role, catalyzes the synthesis of the hydroxymethylpyrimidine phosphate (HMP-P) moiety of thiamine from aminoimidazole ribotide (AIR) in a radical S-adenosyl-L-methionine (SAM)-dependent reaction. The polypeptide is Phosphomethylpyrimidine synthase (Anaeromyxobacter sp. (strain Fw109-5)).